Reading from the N-terminus, the 335-residue chain is Homeobox protein Hox-A1 (335 aa).

The disordered stretch occupies residues Ile61–Tyr80. Basic residues predominate over residues Pro64–Pro75. The segment at Pro75–Gln203 is interaction with OGT. The Antp-type hexapeptide motif lies at Thr204–Lys209. Positions Pro229 to Glu288 form a DNA-binding region, homeobox. The interval Arg281–His335 is disordered. Basic and acidic residues predominate over residues Asn303 to Glu312. The segment covering Lys313–Ser328 has biased composition (low complexity).

The protein belongs to the Antp homeobox family. Labial subfamily. In terms of assembly, interacts with OGT (via TPR repeats domain); the interaction takes place mainly in the nucleus. Forms a DNA-binding heterodimer with transcription factor PBX1.

Its subcellular location is the nucleus. Its function is as follows. Sequence-specific transcription factor. Regulates multiple developmental processes including brainstem, inner and outer ear, abducens nerve and cardiovascular development and morphogenesis as well as cognition and behavior. Also part of a developmental regulatory system that provides cells with specific positional identities on the anterior-posterior axis. Acts on the anterior body structures. Seems to act in the maintenance and/or generation of hindbrain segments. Activates transcription in the presence of PBX1A and PKNOX1. The protein is Homeobox protein Hox-A1 (HOXA1) of Homo sapiens (Human).